The primary structure comprises 231 residues: MHLITALVLLLQLIHFITSSPIPQEVVGGPGPVVGGSGIGNVWEKANEQAAEQQNIGGPGPVISGSGIGDVWNKANEPAEQQENIGGPGPVVSGSGIGNVWEKANEQAAHQQSIEGPGPVVSGSGIGNVWEKANEQAAHQQSIEGPGPVVSGSGIGDVWNKANEQAAEQQNIGGPGPVISGSGIGNVWEKANEQAAEQQNIGVGGPGPVKSGSGIGNVWEETNEEAASMQA.

The signal sequence occupies residues 1–19; the sequence is MHLITALVLLLQLIHFITS. 7 consecutive repeat copies span residues 28-56, 57-85, 86-114, 115-143, 144-172, 173-201, and 204-231. The tract at residues 28–201 is 6 X 29 AA tandem repeats of [EG]-G-P-G-P-V-[IV]-[SG]-G-S-G-I-G-[ND]-V-W-[NE]-K-A-N-E-[QP]-A-[AE]-[QEH]-Q-[EQ]-[NS]-I; that stretch reads GGPGPVVGGS…NEQAAEQQNI (174 aa). Disordered stretches follow at residues 107–126 and 134–231; these read QAAHQQSIEGPGPVVSGSGI and NEQA…SMQA. Composition is skewed to low complexity over residues 114 to 123, 143 to 152, and 177 to 187; these read IEGPGPVVSG and PVISGSGIGNV.

In Anisakis simplex (Herring worm), this protein is Allergen Ani s 10.